The chain runs to 424 residues: Tyrosine--tRNA ligase (424 aa).

Tyr37 contributes to the L-tyrosine binding site. A 'HIGH' region motif is present at residues 42 to 51; that stretch reads ITADSLHVGH. Tyr175 and Gln179 together coordinate L-tyrosine. Positions 235-239 match the 'KMSKS' region motif; sequence KFGKT. Lys238 serves as a coordination point for ATP. The 59-residue stretch at 356-414 folds into the S4 RNA-binding domain; it reads GNLQQLLVYSRLALSRSHAKSMIVSNSVRINNIIQNNPFYILCNRDKMYHKYTLLSRGK.

The protein belongs to the class-I aminoacyl-tRNA synthetase family. TyrS type 1 subfamily. Homodimer.

It localises to the cytoplasm. The enzyme catalyses tRNA(Tyr) + L-tyrosine + ATP = L-tyrosyl-tRNA(Tyr) + AMP + diphosphate + H(+). Its function is as follows. Catalyzes the attachment of tyrosine to tRNA(Tyr) in a two-step reaction: tyrosine is first activated by ATP to form Tyr-AMP and then transferred to the acceptor end of tRNA(Tyr). This chain is Tyrosine--tRNA ligase, found in Buchnera aphidicola subsp. Baizongia pistaciae (strain Bp).